The chain runs to 206 residues: RNA pyrophosphohydrolase (206 aa).

Residues 6-150 (GYRPNVGIVI…KRDVYRKVMK (145 aa)) form the Nudix hydrolase domain. Residues 38 to 59 (GGINEGENIETAMYRELYEEVG) carry the Nudix box motif. Over residues 162–191 (KPETVEKPRVERTEKRDFQKRDNQKREFRK) the composition is skewed to basic and acidic residues. A disordered region spans residues 162–206 (KPETVEKPRVERTEKRDFQKRDNQKREFRKSARMWNNSHQKGKAQ).

This sequence belongs to the Nudix hydrolase family. RppH subfamily. The cofactor is a divalent metal cation.

Functionally, accelerates the degradation of transcripts by removing pyrophosphate from the 5'-end of triphosphorylated RNA, leading to a more labile monophosphorylated state that can stimulate subsequent ribonuclease cleavage. This chain is RNA pyrophosphohydrolase, found in Actinobacillus pleuropneumoniae serotype 5b (strain L20).